Here is a 316-residue protein sequence, read N- to C-terminus: Nautilin-63 (316 aa).

4 disordered regions span residues 1–26 (IPDLASSRSTLPVLTKGPTGLLGPRG), 149–173 (PFPTSRSTYGPSGSQPGKKGVVTPF), 189–238 (DSRC…GIAS), and 259–278 (PPTSPFFTGPSGYTSDGLNK). Over residues 10–26 (TLPVLTKGPTGLLGPRG) the composition is skewed to low complexity. 3 stretches are compositionally biased toward polar residues: residues 152–163 (TSRSTYGPSGSQ), 207–216 (GHSSPATLNS), and 269–278 (SGYTSDGLNK).

Post-translationally, glycosylated; contains mainly glucose, galactose, galactosamine, glucosamine and glucuronic acid. As to expression, component of the acid-soluble organic matrix of nacreous shell layers (at protein level).

Its subcellular location is the secreted. Functionally, involved in nacre formation. Affects morphology of calcite crystals in vitro but does not inhibit their formation. Binds chitin. In Nautilus macromphalus (Bellybutton nautilus), this protein is Nautilin-63.